The chain runs to 336 residues: Protein ABHD13 (336 aa).

A helical; Signal-anchor for type II membrane protein transmembrane segment spans residues Phe37–Leu57. Residues Ser193, Asp268, and His298 each act as charge relay system in the active site. N-linked (GlcNAc...) asparagine glycosylation is present at Asn299.

It belongs to the serine esterase family.

It is found in the membrane. The polypeptide is Protein ABHD13 (Xenopus laevis (African clawed frog)).